The primary structure comprises 493 residues: Ketol-acid reductoisomerase (NADP(+)) (493 aa).

The KARI N-terminal Rossmann domain maps to 15–208; the sequence is AQLGKCRFMQ…GGDRAGVLES (194 aa). NADP(+) is bound by residues 45-48, R68, R76, S78, and 108-110; these read CGAQ and DKQ. H132 is a catalytic residue. Position 158 (G158) interacts with NADP(+). KARI C-terminal knotted domains lie at 209 to 344 and 345 to 486; these read SFVA…NAPA and FAGK…MKDM. Mg(2+)-binding residues include D217, E221, E389, and E393. S414 is a substrate binding site.

This sequence belongs to the ketol-acid reductoisomerase family. Mg(2+) serves as cofactor.

It carries out the reaction (2R)-2,3-dihydroxy-3-methylbutanoate + NADP(+) = (2S)-2-acetolactate + NADPH + H(+). It catalyses the reaction (2R,3R)-2,3-dihydroxy-3-methylpentanoate + NADP(+) = (S)-2-ethyl-2-hydroxy-3-oxobutanoate + NADPH + H(+). The protein operates within amino-acid biosynthesis; L-isoleucine biosynthesis; L-isoleucine from 2-oxobutanoate: step 2/4. Its pathway is amino-acid biosynthesis; L-valine biosynthesis; L-valine from pyruvate: step 2/4. In terms of biological role, involved in the biosynthesis of branched-chain amino acids (BCAA). Catalyzes an alkyl-migration followed by a ketol-acid reduction of (S)-2-acetolactate (S2AL) to yield (R)-2,3-dihydroxy-isovalerate. In the isomerase reaction, S2AL is rearranged via a Mg-dependent methyl migration to produce 3-hydroxy-3-methyl-2-ketobutyrate (HMKB). In the reductase reaction, this 2-ketoacid undergoes a metal-dependent reduction by NADPH to yield (R)-2,3-dihydroxy-isovalerate. This is Ketol-acid reductoisomerase (NADP(+)) from Aeromonas hydrophila subsp. hydrophila (strain ATCC 7966 / DSM 30187 / BCRC 13018 / CCUG 14551 / JCM 1027 / KCTC 2358 / NCIMB 9240 / NCTC 8049).